Reading from the N-terminus, the 407-residue chain is Putative glucose/galactose transporter (407 aa).

A run of 12 helical transmembrane segments spans residues 11–31 (GSLTALFFLMGFITVLNDILI), 47–67 (LIQFCFFGAYFIMGGVFGNVI), 70–90 (IGYPFGVVLGFVITATGCALF), 96–116 (FGSYGFFLGALFILASGIVCL), 139–159 (VQAFNSLGTTLGPIFGSLLIF), 180–200 (VQMPYLGLAVFSLLLALIMYL), 225–245 (FVFGALGIFFYVGGEVAIGSF), 263–283 (HYLVYYWGGAMVGRFLGSVLM), 300–320 (IVLIALAIIIGGKIALFALTF), 321–341 (VGFFNSIMFPTIFSLATLNLG), 349–369 (GVISMAIVGGALIPPIQGAVT), and 378–398 (NLLYAYGVPLLCYFYILFFAL).

Belongs to the major facilitator superfamily. FHS transporter (TC 2.A.1.7) family.

The protein resides in the cell inner membrane. Intake of glucose and galactose. This is Putative glucose/galactose transporter (gluP) from Helicobacter pylori (strain ATCC 700392 / 26695) (Campylobacter pylori).